Reading from the N-terminus, the 435-residue chain is Histone acetyltransferase type B subunit 2 (435 aa).

5 WD repeats span residues 135–175 (NHAG…SKAP), 188–228 (GQTK…KQDP), 238–278 (GHSA…TAKA), 284–324 (GHNA…TKHH), and 328–368 (AHTN…AEQT). The segment at 370–374 (DDAED) is interaction with the histone H4 N-terminus. The stretch at 385–425 (GHTSKVCDISWSPSSPWTIASASEDNILQVWEPSRHLRTPY) is one WD 6 repeat.

This sequence belongs to the WD repeat RBAP46/RBAP48/MSI1 family. In terms of assembly, component of the HAT-B complex composed of at least HAT1 and HAT2. The HAT-B complex binds to histone H4 tail.

Its subcellular location is the cytoplasm. It is found in the nucleus. In terms of biological role, regulatory subunit of the histone acetylase B (HAT-B) complex. The complex acetylates 'Lys-12' of histone H4 which is required for telomeric silencing. This Cryptococcus neoformans var. neoformans serotype D (strain B-3501A) (Filobasidiella neoformans) protein is Histone acetyltransferase type B subunit 2 (HAT2).